Consider the following 252-residue polypeptide: Type II secretion system protein N (252 aa).

Over 1-4 (MKRA) the chain is Cytoplasmic. The chain crosses the membrane as a helical span at residues 5–25 (VGYGLLFSTVLMTSVVVHLPA). The Periplasmic portion of the chain corresponds to 26-252 (QVALSPLPLP…RYPFNQQGQL (227 aa)).

It belongs to the GSP N family.

The protein resides in the cell inner membrane. In terms of biological role, involved in a type II secretion system (T2SS, formerly general secretion pathway, GSP) for the export of proteins. Required for secretion of cholera toxin through the outer membrane. The protein is Type II secretion system protein N (epsN) of Vibrio cholerae serotype O1 (strain ATCC 39315 / El Tor Inaba N16961).